A 523-amino-acid chain; its full sequence is La-related protein 1C (523 aa).

The span at 1 to 16 (MASATSNNPASSSMSP) shows a compositional bias: low complexity. Disordered regions lie at residues 1–52 (MASA…VRGE) and 95–313 (AAGD…VRHP). Ala2 is subject to N-acetylalanine. Residues 22–31 (NHGSPTASVA) are compositionally biased toward polar residues. Low complexity-rich tracts occupy residues 32–44 (QSPRRPSRQVSSP) and 146–169 (SNKSSSDSLKSLGDVPSSSSASSS). The residue at position 33 (Ser33) is a Phosphoserine. Polar residues-rich tracts occupy residues 206-270 (QRNG…NGNH) and 282-305 (HGNQNWTFQRSFNGREGNAQSQRG). Positions 363 to 452 (HYQDPPLHMK…RDNWQNWVLR (90 aa)) constitute an HTH La-type RNA-binding domain. The tract at residues 474 to 523 (GNLSVDQSSADPIGGSSSQLQPTEALSDDQQQSSSTAPVSNHNAPDGANR) is disordered. The segment covering 477–516 (SVDQSSADPIGGSSSQLQPTEALSDDQQQSSSTAPVSNHN) has biased composition (polar residues).

It belongs to the LARP family. Age-dependent accumulation in rosette leaves.

It is found in the cytoplasm. Its function is as follows. Promotes leaf senescence mediated by abscisic acid (ABA), salicylic acid (SA) and jasmonic acid (MeJA), probably though the induction of expression of senescence-associated genes (SAGs) and defense-related genes. In Arabidopsis thaliana (Mouse-ear cress), this protein is La-related protein 1C (LARP1C).